The primary structure comprises 153 residues: Mitochondrial fission 1 protein (153 aa).

At 1 to 127 (MFGKSTYPAL…SIHEKVTQEG (127 aa)) the chain is on the cytoplasmic side. Residues 76-109 (RECLYYLALGSYKIGDYSNATRYADTLLKNEPEN) form a TPR repeat. Residues 128 to 148 (LIGIGIAGGALAVGVGILGAL) form a helical membrane-spanning segment. Over 149-153 (LRKKR) the chain is Mitochondrial intermembrane.

This sequence belongs to the FIS1 family.

The protein localises to the mitochondrion outer membrane. Has a role in mitochondrial fission. Has a role in outer membrane fission but not matrix separation. The protein is Mitochondrial fission 1 protein (FIS1) of Debaryomyces hansenii (strain ATCC 36239 / CBS 767 / BCRC 21394 / JCM 1990 / NBRC 0083 / IGC 2968) (Yeast).